The primary structure comprises 582 residues: MSQPIPPEDVWPTYKRLLSYVRPYWFMLVISVIGYALYAGAQAGAAQLAGYLGDTIVNPTDARVLIVSIAPLVLVLFQGLGQFMGSYSMNWVAQQIVYVLRNDVFEHVLKLPQSEYHRNASGRIMSKIIFDAQQVTSAGTDAIIVIIREGLTVIGLFSFLLWQNWKLTLILVTVVPLIALVMNITSKRFRKISRRIQSSMANITHFLGEAIEGSGEVKIFGGQAQEADRFHNVSRSFAKQNVKLNASKIASTVIVQLFVAVGIGFITYLYIHLMGEDLTVGGFLSYITAAGMIQKPLKQLTDVNVKVQRGVTGAASLFELLDTEQETDTGTYTVATKVDGNIDFEGVSFGYDPASPVVRQLNFAIKAGETVALVGRSGAGKSTISAMLPRFFDPDQGRILLDGIPLQEYQLSELRNQIAMVSQRVVLFNDSVRNNIAYGELRSSDDASIIKAAKDAHAWSFIEQLEHGLDTLLGQDGVQLSGGQRQRIAIARALLKDAPVLILDEATSALDSESEHHIQQALEQVMQGRTTLVIAHRLSTIEKADRIMVLDQGQLIEQGSHQQLLEKNGLYTQMYRMNFSEE.

5 consecutive transmembrane segments (helical) span residues 25–45, 64–84, 142–162, 165–185, and 253–273; these read WFMLVISVIGYALYAGAQAGA, VLIVSIAPLVLVLFQGLGQFM, AIIVIIREGLTVIGLFSFLLW, WKLTLILVTVVPLIALVMNIT, and VIVQLFVAVGIGFITYLYIHL. Residues 29 to 309 form the ABC transmembrane type-1 domain; that stretch reads VISVIGYALY…LTDVNVKVQR (281 aa). The 236-residue stretch at 342-577 folds into the ABC transporter domain; sequence IDFEGVSFGY…NGLYTQMYRM (236 aa). 375-382 serves as a coordination point for ATP; sequence GRSGAGKS.

This sequence belongs to the ABC transporter superfamily. Lipid exporter (TC 3.A.1.106) family. In terms of assembly, homodimer.

It is found in the cell inner membrane. The enzyme catalyses ATP + H2O + lipid A-core oligosaccharideSide 1 = ADP + phosphate + lipid A-core oligosaccharideSide 2.. In terms of biological role, involved in lipopolysaccharide (LPS) biosynthesis. Translocates lipid A-core from the inner to the outer leaflet of the inner membrane. Transmembrane domains (TMD) form a pore in the inner membrane and the ATP-binding domain (NBD) is responsible for energy generation. This is ATP-dependent lipid A-core flippase from Alcanivorax borkumensis (strain ATCC 700651 / DSM 11573 / NCIMB 13689 / SK2).